Reading from the N-terminus, the 890-residue chain is Serine/threonine-protein kinase D3 (890 aa).

5 positions are modified to phosphoserine: serine 6, serine 27, serine 37, serine 41, and serine 44. Residues 154–204 form a Phorbol-ester/DAG-type 1 zinc finger; that stretch reads PHTLYVHSYKAPTFCDYCGEMLWGLVRQGLKCEGCGLNYHKRCAFKIPNNC. Phosphoserine occurs at positions 213 and 216. Residues 271 to 321 form a Phorbol-ester/DAG-type 2 zinc finger; the sequence is PHTFAVHSYTRPTICQYCKRLLKGLFRQGMQCKDCKFNCHKRCASKVPRDC. The disordered stretch occupies residues 332-371; sequence SSLGTDTDIPMDIDNNDINSDSSRGLDDTEEPSPPEDKMF. 3 positions are modified to phosphoserine: serine 364, serine 391, and serine 395. The PH domain occupies 416–532; it reads TMVKEGWMVH…WEKAIRQALM (117 aa). Tyrosine 426 carries the post-translational modification Phosphotyrosine. A Phosphoserine modification is found at serine 442. Residue tyrosine 457 is modified to Phosphotyrosine. At threonine 535 the chain carries Phosphothreonine. A Phosphoserine modification is found at serine 539. A Protein kinase domain is found at 576–832; the sequence is IFADEVLGSG…VDKSLSHPWL (257 aa). Residues 582–590 and lysine 605 each bind ATP; that span reads LGSGQFGIV. Aspartate 699 (proton acceptor) is an active-site residue. Serine 731 carries the phosphoserine; by PKC modification. Serine 735 is modified (phosphoserine; by autocatalysis). Position 742 is a phosphotyrosine (tyrosine 742).

Belongs to the protein kinase superfamily. CAMK Ser/Thr protein kinase family. PKD subfamily. Mg(2+) serves as cofactor. In terms of tissue distribution, ubiquitous.

The protein resides in the cytoplasm. It localises to the membrane. The enzyme catalyses L-seryl-[protein] + ATP = O-phospho-L-seryl-[protein] + ADP + H(+). The catalysed reaction is L-threonyl-[protein] + ATP = O-phospho-L-threonyl-[protein] + ADP + H(+). Activated by DAG and phorbol esters. Phorbol-ester/DAG-type domains 1 and 2 bind both DAG and phorbol ester with high affinity and mediate translocation to the cell membrane. Autophosphorylation of Ser-735 and phosphorylation of Ser-731 by PKC relieves auto-inhibition by the PH domain. Its function is as follows. Converts transient diacylglycerol (DAG) signals into prolonged physiological effects, downstream of PKC. Involved in resistance to oxidative stress. This is Serine/threonine-protein kinase D3 (PRKD3) from Homo sapiens (Human).